The sequence spans 177 residues: ATP synthase subunit b (177 aa).

Residues His16 to Leu36 form a helical membrane-spanning segment.

The protein belongs to the ATPase B chain family. F-type ATPases have 2 components, F(1) - the catalytic core - and F(0) - the membrane proton channel. F(1) has five subunits: alpha(3), beta(3), gamma(1), delta(1), epsilon(1). F(0) has three main subunits: a(1), b(2) and c(10-14). The alpha and beta chains form an alternating ring which encloses part of the gamma chain. F(1) is attached to F(0) by a central stalk formed by the gamma and epsilon chains, while a peripheral stalk is formed by the delta and b chains.

Its subcellular location is the cell membrane. Its function is as follows. F(1)F(0) ATP synthase produces ATP from ADP in the presence of a proton or sodium gradient. F-type ATPases consist of two structural domains, F(1) containing the extramembraneous catalytic core and F(0) containing the membrane proton channel, linked together by a central stalk and a peripheral stalk. During catalysis, ATP synthesis in the catalytic domain of F(1) is coupled via a rotary mechanism of the central stalk subunits to proton translocation. Component of the F(0) channel, it forms part of the peripheral stalk, linking F(1) to F(0). The protein is ATP synthase subunit b of Exiguobacterium sibiricum (strain DSM 17290 / CCUG 55495 / CIP 109462 / JCM 13490 / 255-15).